Consider the following 684-residue polypeptide: Nuclear transcription factor Y subunit gamma (684 aa).

Disordered stretches follow at residues 1 to 74, 112 to 238, 414 to 487, and 511 to 650; these read MENQ…NIST, MNSP…SSFQ, HSPQ…TQQL, and QQQQ…KNDE. A compositionally biased stretch (low complexity) spans 21–49; sequence SNSHNNHHNNNNNNNYNNNNNNNINNINN. The span at 58–74 shows a compositional bias: polar residues; it reads KSIQQHSPHSSTPNIST. Residues 142 to 162 are compositionally biased toward low complexity; the sequence is HQHPSSASSSSSSSSSSLSSS. Basic residues predominate over residues 163–176; sequence SHHHHSNHHHHHPN. Residues 188 to 203 are compositionally biased toward polar residues; sequence PSLNDSSSNGNGTPAL. Low complexity predominate over residues 220 to 238; sequence TPTSTPNQRFQSNGSSSFQ. Polar residues predominate over residues 414 to 423; sequence HSPQLQEQSS. A compositionally biased stretch (low complexity) spans 424-437; sequence NNNNNNNNNNNNNN. 2 stretches are compositionally biased toward polar residues: residues 438–456 and 464–477; these read SVSV…SPLS and SQDY…NNHN. 3 stretches are compositionally biased toward low complexity: residues 478–487, 511–522, and 529–637; these read QSSLSQTQQL, QQQQHSQQISQQ, and PSNS…NNNN.

This sequence belongs to the NFYC/HAP5 subunit family. In terms of assembly, heterotrimeric transcription factor composed of three components, NF-YA, NF-YB and NF-YC. NF-YB and NF-YC must interact and dimerize for NF-YA association and DNA binding.

The protein resides in the nucleus. Its function is as follows. Stimulates the transcription of various genes by recognizing and binding to a CCAAT motif in promoters. The polypeptide is Nuclear transcription factor Y subunit gamma (nfyc-1) (Dictyostelium discoideum (Social amoeba)).